We begin with the raw amino-acid sequence, 289 residues long: O-methyltransferase asqN (289 aa).

Aspartate 155 contributes to the S-adenosyl-L-methionine binding site. Histidine 195 acts as the Proton acceptor in catalysis.

The protein belongs to the class I-like SAM-binding methyltransferase superfamily. Cation-independent O-methyltransferase family.

The protein operates within secondary metabolite biosynthesis. Its pathway is alkaloid biosynthesis. It participates in mycotoxin biosynthesis. Its function is as follows. O-methyltransferase; part of the gene cluster that mediates the biosynthesis of the aspoquinolone mycotoxins. The role of asqN within the aspoquinolone pathway has still to be determined. The first step of the pathway is catalyzed by the nonribosomal peptide synthetase asqK that condenses anthranilic acid and O-methyl-L-tyrosine to produce 4'-methoxycyclopeptin. 4'-methoxycyclopeptin is then converted to 4'-methoxydehydrocyclopeptin by the ketoglutarate-dependent dioxygenase asqJ. AsqJ also converts its first product 4'-methoxydehydrocyclopeptin to 4'-methoxycyclopenin. The following conversion of 4'-methoxycyclopenin into 4'-methoxyviridicatin is catalyzed by the cyclopenase asqI. 4'-methoxyviridicatin is the precursor of quinolone natural products, and is further converted to quinolinone B. The prenyltransferase asqH1 then catalyzes the canonical Friedel-Crafts alkylation of quinolinone B with dimethylallyl cation to yield dimethylallyl quinolone, which is subjected to FAD-dependent dehydrogenation by the FAD-linked oxidoreductase asqF to yield conjugated aryl diene. The delta(3') double bond then serves as the site of the second alkylation with DMAPP catalyzed by the prenyltransferase asqH2 to yield a carbenium ion intermediate, which can be attacked by H(2)O to yield a styrenyl quinolone containing a C3'-hydroxyprenyl chain. The FAD-dependent monooxygenase asqG performs epoxidation of the terminal C7'-C8' olefin. Finally, after dehydratation of the epoxide at C3 by asqC, the quinolone epoxide rearrangement protein asqO catalyzes an enzymatic 3-exo-tet cyclization to yield the cyclopropyl-THF ring system in aspoquinolone. This is O-methyltransferase asqN from Emericella nidulans (strain FGSC A4 / ATCC 38163 / CBS 112.46 / NRRL 194 / M139) (Aspergillus nidulans).